The primary structure comprises 296 residues: MPELPEVETVKRGLAPAMEGARVARLELRRQDLRFPFPEALADRVSGRTIVGLGRRAKYLLVDLDDGNTLVSHLGMSGSFRIEEGAASAMPGEFHHARTKDEKHDHVVFHLEGQGGPRRVVYNDPRRFGFMDMVRRADLAAHPFFRDLGPEPTGNDLGAAYLAERFRDKAQPLKSALLDQKNIAGLGNIYVCEALWRSHLSPIRAAGTLVTPGGKPKEKLGLLVASIRDVIADAIAAGGSSLRDHIQTDGSLGYFQHSFSVYDREGQACGTPGCGGTVARIVQAGRSTFYCAACQK.

Residue P2 is the Schiff-base intermediate with DNA of the active site. The Proton donor role is filled by E3. K58 (proton donor; for beta-elimination activity) is an active-site residue. H104, R126, and K169 together coordinate DNA. The FPG-type zinc-finger motif lies at 260-296; it reads SVYDREGQACGTPGCGGTVARIVQAGRSTFYCAACQK. The Proton donor; for delta-elimination activity role is filled by R286.

It belongs to the FPG family. As to quaternary structure, monomer. Zn(2+) serves as cofactor.

The enzyme catalyses Hydrolysis of DNA containing ring-opened 7-methylguanine residues, releasing 2,6-diamino-4-hydroxy-5-(N-methyl)formamidopyrimidine.. It carries out the reaction 2'-deoxyribonucleotide-(2'-deoxyribose 5'-phosphate)-2'-deoxyribonucleotide-DNA = a 3'-end 2'-deoxyribonucleotide-(2,3-dehydro-2,3-deoxyribose 5'-phosphate)-DNA + a 5'-end 5'-phospho-2'-deoxyribonucleoside-DNA + H(+). Its function is as follows. Involved in base excision repair of DNA damaged by oxidation or by mutagenic agents. Acts as a DNA glycosylase that recognizes and removes damaged bases. Has a preference for oxidized purines, such as 7,8-dihydro-8-oxoguanine (8-oxoG). Has AP (apurinic/apyrimidinic) lyase activity and introduces nicks in the DNA strand. Cleaves the DNA backbone by beta-delta elimination to generate a single-strand break at the site of the removed base with both 3'- and 5'-phosphates. The protein is Formamidopyrimidine-DNA glycosylase of Rhizobium etli (strain CIAT 652).